A 440-amino-acid chain; its full sequence is tRNA-2-methylthio-N(6)-dimethylallyladenosine synthase (440 aa).

Positions 5 to 121 constitute an MTTase N-terminal domain; that stretch reads KLLYLETFGC…LPELVRAAEK (117 aa). Residues Cys14, Cys50, Cys84, Cys159, Cys163, and Cys166 each contribute to the [4Fe-4S] cluster site. A Radical SAM core domain is found at 145 to 375; the sequence is RTDGVSRFVT…LDLQRRITLE (231 aa). The TRAM domain occupies 378–440; that stretch reads KSFVGTVQQV…QNSLQGELCR (63 aa).

The protein belongs to the methylthiotransferase family. MiaB subfamily. In terms of assembly, monomer. The cofactor is [4Fe-4S] cluster.

The protein localises to the cytoplasm. The enzyme catalyses N(6)-dimethylallyladenosine(37) in tRNA + (sulfur carrier)-SH + AH2 + 2 S-adenosyl-L-methionine = 2-methylsulfanyl-N(6)-dimethylallyladenosine(37) in tRNA + (sulfur carrier)-H + 5'-deoxyadenosine + L-methionine + A + S-adenosyl-L-homocysteine + 2 H(+). Its function is as follows. Catalyzes the methylthiolation of N6-(dimethylallyl)adenosine (i(6)A), leading to the formation of 2-methylthio-N6-(dimethylallyl)adenosine (ms(2)i(6)A) at position 37 in tRNAs that read codons beginning with uridine. The chain is tRNA-2-methylthio-N(6)-dimethylallyladenosine synthase from Geotalea uraniireducens (strain Rf4) (Geobacter uraniireducens).